Reading from the N-terminus, the 383-residue chain is Cyclin-D4-2 (383 aa).

The segment covering 51-62 (AAGGGGGSGGGG) has biased composition (gly residues). 3 disordered regions span residues 51 to 70 (AAGG…EDMF), 313 to 335 (QPKP…PESP), and 354 to 383 (ATIA…KLSR). The span at 323-335 (SASASSSSVPESP) shows a compositional bias: low complexity.

This sequence belongs to the cyclin family. Cyclin D subfamily.

This Oryza sativa subsp. japonica (Rice) protein is Cyclin-D4-2 (CYCD4-2).